We begin with the raw amino-acid sequence, 188 residues long: Ribosome maturation factor RimM (188 aa).

Positions 96–169 (DDEFYYADLE…RILIDPMAAG (74 aa)) constitute a PRC barrel domain.

Belongs to the RimM family. Binds ribosomal protein uS19.

It is found in the cytoplasm. In terms of biological role, an accessory protein needed during the final step in the assembly of 30S ribosomal subunit, possibly for assembly of the head region. Essential for efficient processing of 16S rRNA. May be needed both before and after RbfA during the maturation of 16S rRNA. It has affinity for free ribosomal 30S subunits but not for 70S ribosomes. In Agrobacterium fabrum (strain C58 / ATCC 33970) (Agrobacterium tumefaciens (strain C58)), this protein is Ribosome maturation factor RimM.